The sequence spans 77 residues: Pi/alpha-stichotoxin-Hmg5b (77 aa).

The N-terminal stretch at 1–21 (MDYQRLLFLFAVAMVITTTVA) is a signal peptide. A propeptide spanning residues 22–34 (LPKDTALMDGQLQ) is cleaved from the precursor. Disulfide bonds link Cys40–Cys73, Cys42–Cys66, and Cys56–Cys74. A Methionine sulfoxide; partial modification is found at Met52.

This sequence belongs to the sea anemone type 3 (BDS) potassium channel toxin family. Toxin occurs in two forms in the mucus, Hmg 1b-2 which is not oxidized and Hmg 1b-2 MetOx which is oxidized at Met-52.

The protein localises to the secreted. It localises to the nematocyst. Its function is as follows. The non-oxidized toxin is remarkably non-selective with activity on many different ion channels. Weakly and reversibly inhibits rat and human homomeric ASIC1 (isoform ASIC1a) (IC(50)=4.8 uM, and IC(50)=14.6 uM), and ASIC3 (IC(50)=15.9 uM). Molecular modeling interaction with ASIC1a suggests that this peptide hinders the collapse of acidic pockets and stabilizes nonconducting channels state. It activates several potassium channels including Kv1.1/KCNA1, Kv1.2/KCNA2, and drosophila Shaker IR. It moderately to potently inhibits potassium channels including Kv1.3/KCNA3, Kv1.4/KCNA4, Kv1.5/KCNA5, Kv1.6/KCNA6, Kv2.1/KCNB1, Kv4.2/KCND2, Kv7.1/KCNQ1, Kv7.2/Kv7.3 (KCNQ2/KCNQ3), Kv7.4/KCNQ4, hERG/KCNH2, and C.elegans QKT1. On sodium channels, it moderately to potently inhibits Nav1.1/SCN1A, Nav1.2/SCN2A, Nav1.3/SCN3A, Nav1.4/SCN4A, Nav1.5/SCN5A, Nav1.6/SCN8A, Nav1.7/SCN9A, Nav1.8/SCN10A, and B.germanica BgNav. It also moderately to potently inhibits Cav3.1/CACNA1G, Cav3.2/CACNA1H, and Cav3.3/CACNA1I. Significant shifts in the voltage-current relationship are observed on Kv and Nav, depending on the channel isoform, whereas the toxin does not seem to modulate the voltage-sensor domains of Cav channels, acting mainly as a pore blocker. Does not activate nicotinic acetylcholine receptors (nAChR), but potentiates ACh-elicited current of human alpha-7/CHRNA7 nAChR. Is also able to bind T.californica muscle-type nAChRs. In vivo, causes an excitatory effect in mice behavior. Also shows antihyperalgesic and analgesic activity in the acid-induced muscle pain mice model, and weak anti-inflammatory effect in models of acute local inflammation. In terms of biological role, forms an oxidized toxin derivative (Hmg 1b-2 MetOx). Able to bind T.californica muscle-type nAChRs (alpha-1-beta-1-delta-epsilon (CHRNA1-CHRNB1-CHRND-CHRNE)). The protein is Pi/alpha-stichotoxin-Hmg5b of Heteractis magnifica (Magnificent sea anemone).